Reading from the N-terminus, the 247-residue chain is UPF0246 protein LAF_1150 (247 aa).

Belongs to the UPF0246 family.

This chain is UPF0246 protein LAF_1150, found in Limosilactobacillus fermentum (strain NBRC 3956 / LMG 18251) (Lactobacillus fermentum).